Reading from the N-terminus, the 241-residue chain is Queuine tRNA-ribosyltransferase-like protein (241 aa).

The protein belongs to the queuine tRNA-ribosyltransferase family.

The polypeptide is Queuine tRNA-ribosyltransferase-like protein (Plasmodium falciparum).